The sequence spans 300 residues: F-box/LRR-repeat protein 15 (300 aa).

The residue at position 1 (Met1) is an N-acetylmethionine. Residues Leu19–Asp66 form the F-box domain. The interaction with SMURF1 stretch occupies residues Asn113–Arg269. LRR repeat units lie at residues Arg141 to Ala162, Ala167 to Ala188, Gly194 to Ala215, Glu220 to Ala241, and Ala246 to Arg267.

This sequence belongs to the FBXL15 family. In terms of assembly, part of the SCF (SKP1-CUL1-F-box) E3 ubiquitin-protein ligase complex SCF(FBXL15) composed of CUL1, SKP1, RBX1 and FBXL15.

The protein resides in the cytoplasm. It participates in protein modification; protein ubiquitination. Functionally, substrate recognition component of a SCF (SKP1-CUL1-F-box protein) E3 ubiquitin-protein ligase complex which mediates the ubiquitination and subsequent proteasomal degradation of SMURF1, thereby acting as a positive regulator of the BMP signaling pathway. Required for dorsal/ventral pattern formation and bone mass maintenance. Also mediates ubiquitination of SMURF2 and WWP2. This Canis lupus familiaris (Dog) protein is F-box/LRR-repeat protein 15 (FBXL15).